The sequence spans 223 residues: MDLASLRAQQIELASSVIREDRLDKDPPDLIAGADVGFEQGGEVTRAAMVLLKYPSLELVEYKVARIATTMPYIPGFLSFREYPALLAAWEMLSQKPDLVFVDGHGISHPRRLGVASHFGLMVDVPTIGVAKKRLCGKFEPLSSEPGALAPLMDKGEQLAWVWRSKARCNPLFIATGHRVSVDSALAWVQRCMKGYRLPEPTRWADAVASERPAFVRYTANQP.

Mg(2+)-binding residues include aspartate 35 and aspartate 103.

The protein belongs to the endonuclease V family. Mg(2+) serves as cofactor.

The protein resides in the cytoplasm. It catalyses the reaction Endonucleolytic cleavage at apurinic or apyrimidinic sites to products with a 5'-phosphate.. In terms of biological role, DNA repair enzyme involved in the repair of deaminated bases. Selectively cleaves double-stranded DNA at the second phosphodiester bond 3' to a deoxyinosine leaving behind the intact lesion on the nicked DNA. The protein is Endonuclease V of Escherichia coli O139:H28 (strain E24377A / ETEC).